An 880-amino-acid chain; its full sequence is Alanine--tRNA ligase (880 aa).

Residues histidine 567, histidine 571, cysteine 669, and histidine 673 each coordinate Zn(2+).

It belongs to the class-II aminoacyl-tRNA synthetase family. The cofactor is Zn(2+).

The protein resides in the cytoplasm. The enzyme catalyses tRNA(Ala) + L-alanine + ATP = L-alanyl-tRNA(Ala) + AMP + diphosphate. Catalyzes the attachment of alanine to tRNA(Ala) in a two-step reaction: alanine is first activated by ATP to form Ala-AMP and then transferred to the acceptor end of tRNA(Ala). Also edits incorrectly charged Ser-tRNA(Ala) and Gly-tRNA(Ala) via its editing domain. The sequence is that of Alanine--tRNA ligase from Bacillus mycoides (strain KBAB4) (Bacillus weihenstephanensis).